We begin with the raw amino-acid sequence, 171 residues long: Transcription antitermination protein NusB (171 aa).

It belongs to the NusB family.

Involved in transcription antitermination. Required for transcription of ribosomal RNA (rRNA) genes. Binds specifically to the boxA antiterminator sequence of the ribosomal RNA (rrn) operons. The sequence is that of Transcription antitermination protein NusB from Pelodictyon phaeoclathratiforme (strain DSM 5477 / BU-1).